The primary structure comprises 424 residues: Serpin E3 (424 aa).

An N-terminal signal peptide occupies residues 1 to 20 (MPPFLITLFLFHSCCLRANG). N-linked (GlcNAc...) asparagine glycosylation occurs at Asn-46. The disordered stretch occupies residues 143-174 (DLSEPNSTAIQTSEGASRETAGGGPSEGPGGW). Positions 146 to 157 (EPNSTAIQTSEG) are enriched in polar residues. Residues 163-173 (AGGGPSEGPGG) show a composition bias toward gly residues.

The protein belongs to the serpin family.

It localises to the secreted. Probable serine protease inhibitor. The protein is Serpin E3 (SERPINE3) of Homo sapiens (Human).